Reading from the N-terminus, the 408-residue chain is UDP-glucose 4-epimerase 2 (408 aa).

13-44 (TVLVTGGAGYIGSHAVLQLLLAGFRAVVVDNL) serves as a coordination point for NAD(+). A substrate-binding site is contributed by S138. The active-site Proton acceptor is Y162. The disordered stretch occupies residues 369 to 408 (GSPKQNGHCTNGFSESTRHNGHNGYGLVDSAKHNGNGHFH). The span at 370-383 (SPKQNGHCTNGFSE) shows a compositional bias: polar residues.

The protein belongs to the NAD(P)-dependent epimerase/dehydratase family. NAD(+) serves as cofactor.

The catalysed reaction is UDP-alpha-D-glucose = UDP-alpha-D-galactose. Its pathway is carbohydrate metabolism; galactose metabolism. Functionally, catalyzes the interconversion between UDP-glucose and UDP-galactose. This chain is UDP-glucose 4-epimerase 2 (UGE-2), found in Oryza sativa subsp. japonica (Rice).